An 88-amino-acid chain; its full sequence is Small ribosomal subunit protein uS15 (88 aa).

This sequence belongs to the universal ribosomal protein uS15 family. As to quaternary structure, part of the 30S ribosomal subunit. Forms a bridge to the 50S subunit in the 70S ribosome, contacting the 23S rRNA.

One of the primary rRNA binding proteins, it binds directly to 16S rRNA where it helps nucleate assembly of the platform of the 30S subunit by binding and bridging several RNA helices of the 16S rRNA. In terms of biological role, forms an intersubunit bridge (bridge B4) with the 23S rRNA of the 50S subunit in the ribosome. The polypeptide is Small ribosomal subunit protein uS15 (Geotalea daltonii (strain DSM 22248 / JCM 15807 / FRC-32) (Geobacter daltonii)).